The following is a 249-amino-acid chain: tRNA pseudouridine synthase A (249 aa).

Asp-53 acts as the Nucleophile in catalysis. Position 111 (Tyr-111) interacts with substrate.

The protein belongs to the tRNA pseudouridine synthase TruA family. In terms of assembly, homodimer.

The enzyme catalyses uridine(38/39/40) in tRNA = pseudouridine(38/39/40) in tRNA. Formation of pseudouridine at positions 38, 39 and 40 in the anticodon stem and loop of transfer RNAs. The polypeptide is tRNA pseudouridine synthase A (Streptococcus pyogenes serotype M1).